A 252-amino-acid polypeptide reads, in one-letter code: Tumor necrosis factor ligand superfamily member 15 (252 aa).

Residues 1–39 (MAEELGLGFGEAVPVEMLPEGCRHRREARTGLAARSKAC) lie on the Cytoplasmic side of the membrane. A helical; Signal-anchor for type II membrane protein transmembrane segment spans residues 40-60 (LALTCCLLSFPILAGLSTLLM). The Extracellular segment spans residues 61–252 (TGQLRIPGKD…DKTFFGAFLI (192 aa)). The THD domain occupies 96 to 252 (PKAHLTIMRQ…DKTFFGAFLI (157 aa)). Asn-134 carries an N-linked (GlcNAc...) asparagine glycan. A disulfide bridge connects residues Cys-163 and Cys-203. An N-linked (GlcNAc...) asparagine glycan is attached at Asn-230.

This sequence belongs to the tumor necrosis factor family. Homotrimer.

It is found in the membrane. In terms of biological role, receptor for TNFRSF25 and TNFRSF6B. Mediates activation of NF-kappa-B. Inhibits vascular endothelial growth and angiogenesis (in vitro). Promotes activation of caspases and apoptosis. Promotes splenocyte alloactivation. The polypeptide is Tumor necrosis factor ligand superfamily member 15 (Tnfsf15) (Rattus norvegicus (Rat)).